Reading from the N-terminus, the 366-residue chain is Glycerol-3-phosphate dehydrogenase [NAD(+)], glycosomal (366 aa).

NAD(+) contacts are provided by residues 22–27 (GSGAFG), Phe97, Lys125, and Ala157. Residue Lys125 participates in substrate binding. Catalysis depends on Lys210, which acts as the Proton acceptor. Residues Arg274, Val298, and Glu300 each coordinate NAD(+). 274 to 275 (RN) is a substrate binding site. Positions 364–366 (SKL) match the Microbody targeting signal motif.

This sequence belongs to the NAD-dependent glycerol-3-phosphate dehydrogenase family. In terms of assembly, homodimer.

It localises to the glycosome. It carries out the reaction sn-glycerol 3-phosphate + NAD(+) = dihydroxyacetone phosphate + NADH + H(+). This chain is Glycerol-3-phosphate dehydrogenase [NAD(+)], glycosomal (GPD), found in Leishmania mexicana.